A 134-amino-acid polypeptide reads, in one-letter code: MTDAFQKLFQQMLQSGQEMARAFNPALEHFDMRAMEKLVPTIPADMLEMWFGKTFNREGLDAKTRLLLTIGAITVQGALAEPQLRMTVRQALAAGATKREIAETIFQMSMFGGLPAMQKALEIAQSVYAEEDEE.

The protein resides in the cell membrane. May have a role in the regulation of NDH-1 biosynthesis. This is an uncharacterized protein from Paracoccus denitrificans.